The primary structure comprises 393 residues: 5-amino-6-(D-ribitylamino)uracil--L-tyrosine 4-hydroxyphenyl transferase (393 aa).

The region spanning 71 to 318 (VTYVINRNIN…TAVSRIFLGN (248 aa)) is the Radical SAM core domain. C85, C89, and C92 together coordinate [4Fe-4S] cluster.

It belongs to the radical SAM superfamily. CofH family. As to quaternary structure, consists of two subunits, CofG and CofH. Requires [4Fe-4S] cluster as cofactor.

It carries out the reaction 5-amino-6-(D-ribitylamino)uracil + L-tyrosine + S-adenosyl-L-methionine = 5-amino-5-(4-hydroxybenzyl)-6-(D-ribitylimino)-5,6-dihydrouracil + 2-iminoacetate + 5'-deoxyadenosine + L-methionine + H(+). It participates in cofactor biosynthesis; coenzyme F0 biosynthesis. Its function is as follows. Catalyzes the radical-mediated synthesis of 5-amino-5-(4-hydroxybenzyl)-6-(D-ribitylimino)-5,6-dihydrouracil from 5-amino-6-(D-ribitylamino)uracil and L-tyrosine. The chain is 5-amino-6-(D-ribitylamino)uracil--L-tyrosine 4-hydroxyphenyl transferase from Trichodesmium erythraeum (strain IMS101).